The sequence spans 631 residues: 1-deoxy-D-xylulose-5-phosphate synthase (631 aa).

Residues histidine 73, 113–115 (SHA), asparagine 174, tyrosine 285, and glutamate 367 each bind thiamine diphosphate. Asparagine 174 contacts Mg(2+).

It belongs to the transketolase family. DXPS subfamily. In terms of assembly, homodimer. Requires Mg(2+) as cofactor. Thiamine diphosphate serves as cofactor.

It carries out the reaction D-glyceraldehyde 3-phosphate + pyruvate + H(+) = 1-deoxy-D-xylulose 5-phosphate + CO2. The protein operates within metabolic intermediate biosynthesis; 1-deoxy-D-xylulose 5-phosphate biosynthesis; 1-deoxy-D-xylulose 5-phosphate from D-glyceraldehyde 3-phosphate and pyruvate: step 1/1. Catalyzes the acyloin condensation reaction between C atoms 2 and 3 of pyruvate and glyceraldehyde 3-phosphate to yield 1-deoxy-D-xylulose-5-phosphate (DXP). The chain is 1-deoxy-D-xylulose-5-phosphate synthase from Streptomyces sp. (strain CL190).